The chain runs to 887 residues: MAELPQSRINERNITSEMRESFLDYAMSVIVARALPDVRDGLKPVHRRILYGLNEQGMTPDKSYKKSARIVGDVMGKYHPHGDSSIYEAMVRMAQDFSYRYPLVDGQGNFGSMDGDGAAAMRYTEARMTKITLELLRDINKDTIDFIDNYDGNEREPSVLPARFPNLLANGASGIAVGMATNIPPHNLTELINGVLSLSKNPDISIAELMEDIEGPDFPTAGLILGKSGIRRAYETGRGSIQMRSRAVIEERGGGRQRIVVTEIPFQVNKARMIEKIAELVRDKKIDGITDLRDETSLRTGVRVVIDVRKDANASVILNNLYKQTPLQTSFGVNMIALVNGRPKLINLKEALVHYLEHQKTVVRRRTQYNLRKAKDRAHILEGLRIALDHIDEIISTIRESDTDKVAMESLQQRFKLSEKQAQAILDMRLRRLTGLERDKIEAEYNELLNYISELEAILADEEVLLQLVRDELTEIRDRFGDDRRTEIQLGGFEDLEDEDLIPEEQIVITLSHNNYIKRLPVSTYRAQNRGGRGVQGMNTLEEDFVSQLVTLSTHDHVLFFTNKGRVYKLKGYEVPELSRQSKGIPVVNAIELENDEVISTMIAVKDLESEDNFLVFATKRGVVKRSALSNFSRINRNGKIAISFREDDELIAVRLTSGQEDILIGTSHASLIRFPESTLRPLGRTATGVKGITLREGDEVVGLDVAHANSVDEVLVVTENGYGKRTPVNDYRLSNRGGKGIKTATITERNGNVVCITTVTGEEDLMIVTNAGVIIRLDVADISQNGRAAQGVRLIRLGDDQFVSTVAKVKEDAEDETNEDEQSTSTVSEDGTEQQREAVVNDETPGNAIHTEVIDSEENDEDGRIEVRQDFMDRVEEDIQQSSDEE.

The Topo IIA-type catalytic domain maps to 35–501; sequence LPDVRDGLKP…GFEDLEDEDL (467 aa). Catalysis depends on Y123, which acts as the O-(5'-phospho-DNA)-tyrosine intermediate. The short motif at 528-534 is the GyrA-box element; the sequence is QNRGGRG. The segment at 811–865 is disordered; it reads KEDAEDETNEDEQSTSTVSEDGTEQQREAVVNDETPGNAIHTEVIDSEENDEDGR. Positions 813–823 are enriched in acidic residues; the sequence is DAEDETNEDEQ.

The protein belongs to the type II topoisomerase GyrA/ParC subunit family. In terms of assembly, heterotetramer, composed of two GyrA and two GyrB chains. In the heterotetramer, GyrA contains the active site tyrosine that forms a transient covalent intermediate with DNA, while GyrB binds cofactors and catalyzes ATP hydrolysis.

The protein resides in the cytoplasm. It catalyses the reaction ATP-dependent breakage, passage and rejoining of double-stranded DNA.. In terms of biological role, a type II topoisomerase that negatively supercoils closed circular double-stranded (ds) DNA in an ATP-dependent manner to modulate DNA topology and maintain chromosomes in an underwound state. Negative supercoiling favors strand separation, and DNA replication, transcription, recombination and repair, all of which involve strand separation. Also able to catalyze the interconversion of other topological isomers of dsDNA rings, including catenanes and knotted rings. Type II topoisomerases break and join 2 DNA strands simultaneously in an ATP-dependent manner. This is DNA gyrase subunit A from Staphylococcus aureus (strain MSSA476).